Consider the following 130-residue polypeptide: UPF0146 protein AF_0739.1 (130 aa).

Belongs to the UPF0146 family.

This is UPF0146 protein AF_0739.1 from Archaeoglobus fulgidus (strain ATCC 49558 / DSM 4304 / JCM 9628 / NBRC 100126 / VC-16).